Reading from the N-terminus, the 702-residue chain is Ribosomal RNA large subunit methyltransferase K/L (702 aa).

Residues 43-154 (LIYQSLMWSR…KETASIALDL (112 aa)) form the THUMP domain.

Belongs to the methyltransferase superfamily. RlmKL family.

Its subcellular location is the cytoplasm. It carries out the reaction guanosine(2445) in 23S rRNA + S-adenosyl-L-methionine = N(2)-methylguanosine(2445) in 23S rRNA + S-adenosyl-L-homocysteine + H(+). The catalysed reaction is guanosine(2069) in 23S rRNA + S-adenosyl-L-methionine = N(2)-methylguanosine(2069) in 23S rRNA + S-adenosyl-L-homocysteine + H(+). Specifically methylates the guanine in position 2445 (m2G2445) and the guanine in position 2069 (m7G2069) of 23S rRNA. This chain is Ribosomal RNA large subunit methyltransferase K/L, found in Salmonella schwarzengrund (strain CVM19633).